A 501-amino-acid polypeptide reads, in one-letter code: NADH-quinone oxidoreductase subunit N (501 aa).

Helical transmembrane passes span 4–24 (HLPI…RLLV), 34–54 (FVLA…AETL), 80–100 (LAGG…VYAG), 112–132 (GSFY…CATG), 134–154 (LFNL…LIAF), 167–187 (LIIG…LYAM), 207–227 (PVVI…MALF), 241–261 (PAPV…YALY), 278–298 (LQVL…MAIA), 314–334 (VGYI…GALL), 335–355 (HVLS…GVSW), 376–396 (MGAF…LGFF), 409–429 (GAWV…VYFF), and 463–483 (PASM…LGLF).

The protein belongs to the complex I subunit 2 family. As to quaternary structure, NDH-1 is composed of 14 different subunits. Subunits NuoA, H, J, K, L, M, N constitute the membrane sector of the complex.

The protein resides in the cell membrane. It carries out the reaction a quinone + NADH + 5 H(+)(in) = a quinol + NAD(+) + 4 H(+)(out). NDH-1 shuttles electrons from NADH, via FMN and iron-sulfur (Fe-S) centers, to quinones in the respiratory chain. The immediate electron acceptor for the enzyme in this species is believed to be a menaquinone. Couples the redox reaction to proton translocation (for every two electrons transferred, four hydrogen ions are translocated across the cytoplasmic membrane), and thus conserves the redox energy in a proton gradient. The protein is NADH-quinone oxidoreductase subunit N of Desulforudis audaxviator (strain MP104C).